Reading from the N-terminus, the 276-residue chain is tRNA dimethylallyltransferase (276 aa).

Residues 9-12 are interaction with substrate tRNA; that stretch reads DSLS.

The protein belongs to the IPP transferase family. As to quaternary structure, monomer. Mg(2+) serves as cofactor.

It catalyses the reaction adenosine(37) in tRNA + dimethylallyl diphosphate = N(6)-dimethylallyladenosine(37) in tRNA + diphosphate. Catalyzes the transfer of a dimethylallyl group onto the adenine at position 37 in tRNAs that read codons beginning with uridine, leading to the formation of N6-(dimethylallyl)adenosine (i(6)A). The protein is tRNA dimethylallyltransferase (miaA) of Helicobacter pylori (strain Shi470).